We begin with the raw amino-acid sequence, 333 residues long: UPF0284 protein TGAM_0534 (333 aa).

It belongs to the UPF0284 family.

This Thermococcus gammatolerans (strain DSM 15229 / JCM 11827 / EJ3) protein is UPF0284 protein TGAM_0534.